The sequence spans 341 residues: Methionine import ATP-binding protein MetN 2 (341 aa).

The ABC transporter domain occupies 2–241; the sequence is IELKEVVKEY…PQHTVTKRFV (240 aa). Position 38–45 (38–45) interacts with ATP; that stretch reads GFSGAGKS.

This sequence belongs to the ABC transporter superfamily. Methionine importer (TC 3.A.1.24) family. The complex is composed of two ATP-binding proteins (MetN), two transmembrane proteins (MetI) and a solute-binding protein (MetQ).

The protein resides in the cell membrane. It catalyses the reaction L-methionine(out) + ATP + H2O = L-methionine(in) + ADP + phosphate + H(+). The catalysed reaction is D-methionine(out) + ATP + H2O = D-methionine(in) + ADP + phosphate + H(+). In terms of biological role, part of the ABC transporter complex MetNIQ involved in methionine import. Responsible for energy coupling to the transport system. In Staphylococcus aureus (strain USA300), this protein is Methionine import ATP-binding protein MetN 2.